Here is a 1138-residue protein sequence, read N- to C-terminus: Trafficking protein particle complex subunit 9 (1138 aa).

Phosphoserine is present on residues S557 and S944.

Belongs to the NIBP family. As to quaternary structure, component of the multisubunit TRAPP (transport protein particle) complex, which includes at least TRAPPC2, TRAPPC2L, TRAPPC3, TRAPPC3L, TRAPPC4, TRAPPC5, TRAPPC8, TRAPPC9, TRAPPC10, TRAPPC11 and TRAPPC12. Directly interacts with IKBKB and MAP3K14.

The protein localises to the golgi apparatus. The protein resides in the cis-Golgi network. Its subcellular location is the endoplasmic reticulum. It localises to the cytoplasm. In terms of biological role, functions as an activator of NF-kappa-B through increased phosphorylation of the IKK complex. May function in neuronal cells differentiation. May play a role in vesicular transport from endoplasmic reticulum to Golgi. In Bos taurus (Bovine), this protein is Trafficking protein particle complex subunit 9 (TRAPPC9).